Reading from the N-terminus, the 527-residue chain is Triostin synthetase I (527 aa).

Residue 187-188 (GG) coordinates ATP. Residue 230-231 (HQ) participates in substrate binding. ATP is bound by residues 300–302 (SAP), Asp406, Arg421, and Lys512. Lys512 serves as a coordination point for substrate.

This sequence belongs to the ATP-dependent AMP-binding enzyme family. In terms of assembly, monomer.

In terms of biological role, involved in triostin biosynthesis. Activates quinoxaline-2-carboxylic acid (QA) via catalysis of the ATP-pyrophosphate exchange reaction dependent on QA, and the formation of the corresponding adenylate. Also activates structural analogs of QA such as quinoline-2-carboxylic acid and thieno[3,2-b]pyridine-5-carboxylic acid, but not quinoline-3-carboxylic acid, quinoline-4-carboxylic acid, pyridine-2-carboxylic acid or 2-pyrazinecarboxylic acid. This is Triostin synthetase I (trsA) from Streptomyces triostinicus.